A 685-amino-acid polypeptide reads, in one-letter code: Mesothelin-like protein (685 aa).

Positions 1-32 (MSRTLRPSAMGSRVGALASPGLALLLSLTAHC) are cleaved as a signal peptide. Over 33 to 627 (SGPQAKGLPK…GVSHTSGSPP (595 aa)) the chain is Extracellular. Asn315 and Asn400 each carry an N-linked (GlcNAc...) asparagine glycan. Positions 603–624 (PPSSLIHSLDPPGNDGVSHTSG) are disordered. The chain crosses the membrane as a helical span at residues 628 to 648 (VHLGYLSLAVALPSSLLWLLL). At 649-685 (CQLPSGQMATAHRTLGPMALAQGSWTPEHQIPEKRSC) the chain is on the cytoplasmic side.

This sequence belongs to the mesothelin family.

It is found in the membrane. In terms of biological role, may play a role in cellular adhesion. In Mus musculus (Mouse), this protein is Mesothelin-like protein (Mslnl).